The chain runs to 237 residues: Large ribosomal subunit protein uL1 (237 aa).

This sequence belongs to the universal ribosomal protein uL1 family. Part of the 50S ribosomal subunit.

In terms of biological role, binds directly to 23S rRNA. The L1 stalk is quite mobile in the ribosome, and is involved in E site tRNA release. Its function is as follows. Protein L1 is also a translational repressor protein, it controls the translation of the L11 operon by binding to its mRNA. This is Large ribosomal subunit protein uL1 from Solibacter usitatus (strain Ellin6076).